The primary structure comprises 249 residues: Triosephosphate isomerase (249 aa).

9–11 (NWK) is a substrate binding site. The Electrophile role is filled by histidine 95. Glutamate 166 acts as the Proton acceptor in catalysis. Substrate-binding positions include glycine 172, serine 211, and 232–233 (GG).

It belongs to the triosephosphate isomerase family. As to quaternary structure, homodimer.

It localises to the cytoplasm. The enzyme catalyses D-glyceraldehyde 3-phosphate = dihydroxyacetone phosphate. It functions in the pathway carbohydrate biosynthesis; gluconeogenesis. Its pathway is carbohydrate degradation; glycolysis; D-glyceraldehyde 3-phosphate from glycerone phosphate: step 1/1. In terms of biological role, involved in the gluconeogenesis. Catalyzes stereospecifically the conversion of dihydroxyacetone phosphate (DHAP) to D-glyceraldehyde-3-phosphate (G3P). This is Triosephosphate isomerase from Legionella pneumophila (strain Lens).